Here is a 480-residue protein sequence, read N- to C-terminus: 3-isopropylmalate dehydratase large subunit (480 aa).

Cys361, Cys421, and Cys424 together coordinate [4Fe-4S] cluster.

This sequence belongs to the aconitase/IPM isomerase family. LeuC type 1 subfamily. Heterodimer of LeuC and LeuD. The cofactor is [4Fe-4S] cluster.

The catalysed reaction is (2R,3S)-3-isopropylmalate = (2S)-2-isopropylmalate. The protein operates within amino-acid biosynthesis; L-leucine biosynthesis; L-leucine from 3-methyl-2-oxobutanoate: step 2/4. Catalyzes the isomerization between 2-isopropylmalate and 3-isopropylmalate, via the formation of 2-isopropylmaleate. This chain is 3-isopropylmalate dehydratase large subunit, found in Corynebacterium diphtheriae (strain ATCC 700971 / NCTC 13129 / Biotype gravis).